We begin with the raw amino-acid sequence, 355 residues long: 3-dehydroquinate synthase (355 aa).

NAD(+) is bound by residues 67–72, 101–105, 125–126, Lys-138, Lys-147, and 165–168; these read DGEIYK, GVIGD, TT, and FLNT. Zn(2+)-binding residues include Glu-180, His-243, and His-260.

It belongs to the sugar phosphate cyclases superfamily. Dehydroquinate synthase family. NAD(+) serves as cofactor. Co(2+) is required as a cofactor. Requires Zn(2+) as cofactor.

The protein resides in the cytoplasm. The catalysed reaction is 7-phospho-2-dehydro-3-deoxy-D-arabino-heptonate = 3-dehydroquinate + phosphate. It participates in metabolic intermediate biosynthesis; chorismate biosynthesis; chorismate from D-erythrose 4-phosphate and phosphoenolpyruvate: step 2/7. Its function is as follows. Catalyzes the conversion of 3-deoxy-D-arabino-heptulosonate 7-phosphate (DAHP) to dehydroquinate (DHQ). In Buchnera aphidicola subsp. Baizongia pistaciae (strain Bp), this protein is 3-dehydroquinate synthase.